The following is a 285-amino-acid chain: Ribosomal protein L11 methyltransferase (285 aa).

S-adenosyl-L-methionine contacts are provided by T131, G154, D176, and N223.

The protein belongs to the methyltransferase superfamily. PrmA family.

Its subcellular location is the cytoplasm. The catalysed reaction is L-lysyl-[protein] + 3 S-adenosyl-L-methionine = N(6),N(6),N(6)-trimethyl-L-lysyl-[protein] + 3 S-adenosyl-L-homocysteine + 3 H(+). Its function is as follows. Methylates ribosomal protein L11. In Brucella abortus (strain S19), this protein is Ribosomal protein L11 methyltransferase.